Consider the following 144-residue polypeptide: Granulocyte-macrophage colony-stimulating factor (144 aa).

A signal peptide spans 1–17 (MWLQNLLLLGTVVCSIS). Ser-24 carries an O-linked (GalNAc...) serine glycan. The O-linked (GalNAc...) threonine glycan is linked to Thr-27. N-linked (GlcNAc...) asparagine glycosylation is found at Asn-44, Asn-47, and Asn-54. 2 disulfide bridges follow: Cys-71–Cys-113 and Cys-105–Cys-138.

This sequence belongs to the GM-CSF family. In terms of assembly, monomer. The signaling GM-CSF receptor complex is a dodecamer of two head-to-head hexamers of two alpha, two beta, and two ligand subunits.

The protein resides in the secreted. In terms of biological role, cytokine that stimulates the growth and differentiation of hematopoietic precursor cells from various lineages, including granulocytes, macrophages, eosinophils and erythrocytes. In Sus scrofa (Pig), this protein is Granulocyte-macrophage colony-stimulating factor (CSF2).